A 441-amino-acid chain; its full sequence is uncharacterized protein (441 aa).

A signal peptide spans 1–23 (MSRKYLLSLLLVGALVISVVASG). C24 bears the N-acetylcysteine mark. C24 carries S-archaeol cysteine lipidation.

Belongs to the bacterial solute-binding protein 1 family.

The protein resides in the cell membrane. In terms of biological role, probably part of a binding-protein-dependent transport system PH1214/15/16. This is an uncharacterized protein from Pyrococcus horikoshii (strain ATCC 700860 / DSM 12428 / JCM 9974 / NBRC 100139 / OT-3).